A 223-amino-acid chain; its full sequence is MHMRSFKIAIDGPAGSGKSTISKKLSQKLGWNHIDTGAMFRALTLYLLENEVSWHNEKSLNQILDKINLSYSCNKIFLNQEDVSLKIKSLDVEKHVSSVALIPGVRTKLLKLQKEICANTPNLIMDGRDIGTVVMPDANLKIFLTANITKRALRKQQEDAQNGKITDITQIMKQLKERDHKDYHRHLAPLSKALDAILLDTTELSIDELIAKITTLIEKKRRA.

ATP is bound at residue 12–20; the sequence is GPAGSGKST.

The protein belongs to the cytidylate kinase family. Type 1 subfamily.

It is found in the cytoplasm. The catalysed reaction is CMP + ATP = CDP + ADP. The enzyme catalyses dCMP + ATP = dCDP + ADP. This is Cytidylate kinase from Aster yellows witches'-broom phytoplasma (strain AYWB).